The sequence spans 293 residues: Small ribosomal subunit protein uS5 (293 aa).

Positions 1-56 (MADDAGAAGGPGGPGGPGMGNRGGFRGGFGSGIRGRGRGRGRGRGRGRGARGGKAE) are disordered. Ala2 bears the N-acetylalanine mark. A compositionally biased stretch (gly residues) spans 7–34 (AAGGPGGPGGPGMGNRGGFRGGFGSGIR). The segment covering 35–51 (GRGRGRGRGRGRGRGAR) has biased composition (basic residues). Residues Lys54 and Lys58 each participate in a glycyl lysine isopeptide (Lys-Gly) (interchain with G-Cter in ubiquitin) cross-link. In terms of domain architecture, S5 DRBM spans 102–165 (LKDEVLKIMP…ILAKLSIVPV (64 aa)). Thr252 carries the post-translational modification Phosphothreonine. Lys263 bears the N6-acetyllysine mark. Ser264 carries the phosphoserine modification. Thr270 is subject to Phosphothreonine. Lys275 is modified (N6-acetyllysine; alternate). Residue Lys275 forms a Glycyl lysine isopeptide (Lys-Gly) (interchain with G-Cter in SUMO1); alternate linkage. A Glycyl lysine isopeptide (Lys-Gly) (interchain with G-Cter in SUMO2); alternate cross-link involves residue Lys275. Residue Lys275 forms a Glycyl lysine isopeptide (Lys-Gly) (interchain with G-Cter in ubiquitin); alternate linkage. Position 281 is a phosphoserine (Ser281).

It belongs to the universal ribosomal protein uS5 family. Component of the small ribosomal subunit. Interacts with zinc finger protein ZNF277 (via zinc-finger domains); the interaction is direct; the interaction is extra-ribosomal. Interaction with ZNF277 competes with the binding of RPS2 to protein arginine methyltransferase PRMT3. Post-translationally, citrullinated by PADI4 in the Arg/Gly-rich region. Asymmetric arginine dimethylation by PRMT3 occurs at multiple sites in the Arg/Gly-rich region. In terms of processing, monoubiquitinated at Lys-54 and Lys-58 by RNF10 when a ribosome has stalled during translation, leading to its degradation by the proteasome. Deubiquitinated at Lys-54 and Lys-58 by USP10, preventing degradation by the proteasome and promoting 40S ribosome subunit recycling following ribosome dissociation.

The protein localises to the cytoplasm. It localises to the nucleus. Its subcellular location is the nucleolus. In terms of biological role, component of the ribosome, a large ribonucleoprotein complex responsible for the synthesis of proteins in the cell. The small ribosomal subunit (SSU) binds messenger RNAs (mRNAs) and translates the encoded message by selecting cognate aminoacyl-transfer RNA (tRNA) molecules. The large subunit (LSU) contains the ribosomal catalytic site termed the peptidyl transferase center (PTC), which catalyzes the formation of peptide bonds, thereby polymerizing the amino acids delivered by tRNAs into a polypeptide chain. The nascent polypeptides leave the ribosome through a tunnel in the LSU and interact with protein factors that function in enzymatic processing, targeting, and the membrane insertion of nascent chains at the exit of the ribosomal tunnel. Plays a role in the assembly and function of the 40S ribosomal subunit. Mutations in this protein affects the control of translational fidelity. Involved in nucleolar processing of pre-18S ribosomal RNA and ribosome assembly. The sequence is that of Small ribosomal subunit protein uS5 (RPS2) from Homo sapiens (Human).